The following is a 269-amino-acid chain: Putative hydro-lyase RL2444 (269 aa).

This sequence belongs to the D-glutamate cyclase family.

This Rhizobium johnstonii (strain DSM 114642 / LMG 32736 / 3841) (Rhizobium leguminosarum bv. viciae) protein is Putative hydro-lyase RL2444.